The chain runs to 277 residues: Movement protein (277 aa).

This sequence belongs to the cucumovirus movement protein family.

It is found in the host cell junction. The protein resides in the host plasmodesma. Transports viral genome to neighboring plant cells directly through plasmosdesmata, without any budding. The movement protein allows efficient cell to cell propagation, by bypassing the host cell wall barrier. Acts by forming a tubular structure at the host plasmodesmata, enlarging it enough to allow free passage of virion capsids. This chain is Movement protein, found in Canna (Florist's daisy).